Reading from the N-terminus, the 364-residue chain is Cell division protein FtsZ 1 (364 aa).

GTP contacts are provided by residues 47 to 48 (GA), 97 to 99 (AGG), 134 to 136 (GTG), Glu-165, Arg-169, and Asp-212.

The protein belongs to the FtsZ family. In terms of assembly, homodimer. Polymerizes to form a dynamic ring structure in a strictly GTP-dependent manner. Interacts directly with several other division proteins.

It localises to the cytoplasm. Its function is as follows. Essential cell division protein that forms a contractile ring structure (Z ring) at the future cell division site. The regulation of the ring assembly controls the timing and the location of cell division. One of the functions of the FtsZ ring is to recruit other cell division proteins to the septum to produce a new cell wall between the dividing cells. Binds GTP and shows GTPase activity. This is Cell division protein FtsZ 1 from Methanocaldococcus jannaschii (strain ATCC 43067 / DSM 2661 / JAL-1 / JCM 10045 / NBRC 100440) (Methanococcus jannaschii).